The primary structure comprises 210 residues: N-(5'-phosphoribosyl)anthranilate isomerase (210 aa).

It belongs to the TrpF family.

It carries out the reaction N-(5-phospho-beta-D-ribosyl)anthranilate = 1-(2-carboxyphenylamino)-1-deoxy-D-ribulose 5-phosphate. It participates in amino-acid biosynthesis; L-tryptophan biosynthesis; L-tryptophan from chorismate: step 3/5. This chain is N-(5'-phosphoribosyl)anthranilate isomerase, found in Magnetococcus marinus (strain ATCC BAA-1437 / JCM 17883 / MC-1).